The following is a 423-amino-acid chain: Serpin B12 (423 aa).

Over residues leucine 63–asparagine 72 the composition is skewed to basic and acidic residues. The tract at residues leucine 63 to aspartate 106 is disordered. The segment covering serine 75 to aspartate 106 has biased composition (polar residues).

This sequence belongs to the serpin family. Ov-serpin subfamily. Interacts with SLFN12; as part of a pathway regulating cell differentiation.

The protein resides in the cytoplasm. Its function is as follows. Inhibits trypsin and plasmin, but not thrombin, coagulation factor Xa, or urokinase-type plasminogen activator. May play a role in cell differentiation. This is Serpin B12 (Serpinb12) from Mus musculus (Mouse).